Reading from the N-terminus, the 423-residue chain is Putative competence-damage inducible protein (423 aa).

This sequence belongs to the CinA family.

This is Putative competence-damage inducible protein from Streptococcus pyogenes serotype M4 (strain MGAS10750).